A 303-amino-acid polypeptide reads, in one-letter code: Lipoyl synthase (303 aa).

The [4Fe-4S] cluster site is built by C35, C40, C46, C61, C65, C68, and S273. A Radical SAM core domain is found at 47–262; sequence FRERQATFLI…KELAEKMGFR (216 aa).

It belongs to the radical SAM superfamily. Lipoyl synthase family. [4Fe-4S] cluster is required as a cofactor.

Its subcellular location is the cytoplasm. The catalysed reaction is [[Fe-S] cluster scaffold protein carrying a second [4Fe-4S](2+) cluster] + N(6)-octanoyl-L-lysyl-[protein] + 2 oxidized [2Fe-2S]-[ferredoxin] + 2 S-adenosyl-L-methionine + 4 H(+) = [[Fe-S] cluster scaffold protein] + N(6)-[(R)-dihydrolipoyl]-L-lysyl-[protein] + 4 Fe(3+) + 2 hydrogen sulfide + 2 5'-deoxyadenosine + 2 L-methionine + 2 reduced [2Fe-2S]-[ferredoxin]. It functions in the pathway protein modification; protein lipoylation via endogenous pathway; protein N(6)-(lipoyl)lysine from octanoyl-[acyl-carrier-protein]: step 2/2. In terms of biological role, catalyzes the radical-mediated insertion of two sulfur atoms into the C-6 and C-8 positions of the octanoyl moiety bound to the lipoyl domains of lipoate-dependent enzymes, thereby converting the octanoylated domains into lipoylated derivatives. This Geobacter sulfurreducens (strain ATCC 51573 / DSM 12127 / PCA) protein is Lipoyl synthase.